The sequence spans 142 residues: Relaxin-3 (142 aa).

An N-terminal signal peptide occupies residues 1–25; that stretch reads MARYMLLLLLAVWVLTGELWPGAEA. 3 disulfide bridges follow: Cys-35-Cys-129, Cys-47-Cys-142, and Cys-128-Cys-133. The propeptide at 55–118 is connecting peptide; it reads SDILAHEAMG…GTPGVLRGSR (64 aa).

Belongs to the insulin family. As to quaternary structure, heterodimer of a B chain and an A chain linked by two disulfide bonds.

The protein resides in the secreted. May play a role in neuropeptide signaling processes. Ligand for LGR7, RXFP3 and RXFP4. This Homo sapiens (Human) protein is Relaxin-3 (RLN3).